A 159-amino-acid chain; its full sequence is Transcription elongation factor GreA (159 aa).

Residues 44 to 75 adopt a coiled-coil conformation; it reads SENAEYDAAREQQSQTEARIADLESKLSSATI.

This sequence belongs to the GreA/GreB family.

Functionally, necessary for efficient RNA polymerase transcription elongation past template-encoded arresting sites. The arresting sites in DNA have the property of trapping a certain fraction of elongating RNA polymerases that pass through, resulting in locked ternary complexes. Cleavage of the nascent transcript by cleavage factors such as GreA or GreB allows the resumption of elongation from the new 3'terminus. GreA releases sequences of 2 to 3 nucleotides. In Chlorobium phaeovibrioides (strain DSM 265 / 1930) (Prosthecochloris vibrioformis (strain DSM 265)), this protein is Transcription elongation factor GreA.